A 413-amino-acid polypeptide reads, in one-letter code: Aspartate aminotransferase, cytoplasmic (413 aa).

Positions 39 and 141 each coordinate L-aspartate. Residue Ser-149 is modified to Phosphoserine. Position 195 (Asn-195) interacts with L-aspartate. Lys-259 is subject to N6-(pyridoxal phosphate)lysine. Lys-318 is subject to N6-succinyllysine. Position 387 (Arg-387) interacts with L-aspartate.

Belongs to the class-I pyridoxal-phosphate-dependent aminotransferase family. In terms of assembly, homodimer. Pyridoxal 5'-phosphate is required as a cofactor. As to expression, expressed in neurons of the retina. Localizes to the inner and outer plexiform layers, the inner and outer nuclear layer and the outer segments of photoreceptors.

Its subcellular location is the cytoplasm. The enzyme catalyses L-aspartate + 2-oxoglutarate = oxaloacetate + L-glutamate. It catalyses the reaction L-cysteine + 2-oxoglutarate = 2-oxo-3-sulfanylpropanoate + L-glutamate. It carries out the reaction (2S)-2-aminobutanoate + 2-oxoglutarate = 2-oxobutanoate + L-glutamate. The catalysed reaction is 3-sulfino-L-alanine + 2-oxoglutarate = 3-sulfinopyruvate + L-glutamate. With respect to regulation, inhibited by calcium ions. Its function is as follows. Biosynthesis of L-glutamate from L-aspartate or L-cysteine. Important regulator of levels of glutamate, the major excitatory neurotransmitter of the vertebrate central nervous system. Acts as a scavenger of glutamate in brain neuroprotection. The aspartate aminotransferase activity is involved in hepatic glucose synthesis during development and in adipocyte glyceroneogenesis. Using L-cysteine as substrate, regulates levels of mercaptopyruvate, an important source of hydrogen sulfide. Mercaptopyruvate is converted into H(2)S via the action of 3-mercaptopyruvate sulfurtransferase (3MST). Hydrogen sulfide is an important synaptic modulator and neuroprotectant in the brain. The polypeptide is Aspartate aminotransferase, cytoplasmic (Mus musculus (Mouse)).